Reading from the N-terminus, the 141-residue chain is Putative pre-16S rRNA nuclease (141 aa).

Belongs to the YqgF nuclease family.

It localises to the cytoplasm. In terms of biological role, could be a nuclease involved in processing of the 5'-end of pre-16S rRNA. This chain is Putative pre-16S rRNA nuclease, found in Pseudomonas putida (strain ATCC 47054 / DSM 6125 / CFBP 8728 / NCIMB 11950 / KT2440).